A 1186-amino-acid polypeptide reads, in one-letter code: Partner and localizer of BRCA2 (1186 aa).

A required for its oligomerization and is important for its focal concentration at DNA damage sites region spans residues 1 to 160; it reads MDEPPGKPLS…QKRTFISQER (160 aa). Residues 1-200 are interaction with RAD51; that stretch reads MDEPPGKPLS…PVTEIRTHLL (200 aa). The segment at 1 to 319 is interaction with BRCA1; sequence MDEPPGKPLS…SKSGQLPTSS (319 aa). A DNA-binding (with the preference D loop &gt; dsDNA &gt; ssDNA) region spans residues 1–579; that stretch reads MDEPPGKPLS…EDSLSWSNSA (579 aa). A coiled-coil region spans residues 9 to 41; it reads LSCEEKEKLKEKLAFLKREYSKTLARLQRAQRA. 2 disordered regions span residues 52 to 72 and 95 to 157; these read VEEQDCLSQQDLSPQLKHSEP and KTSI…TFIS. Basic and acidic residues predominate over residues 120-141; that stretch reads RTDDTQEHFPHRVSDPSGEQKQ. Basic residues predominate over residues 143 to 152; sequence LPSRRKKQQK. 2 positions are modified to phosphoserine: Ser172 and Ser190. Residues 252 to 273 form a disordered region; it reads TLSDSGSSQHLEHIPPKGSSEL. Ser285 bears the Phosphoserine mark. The interval 346–365 is disordered; the sequence is KEQNQTEKSLKSPSDTLDGR. Ser376 and Ser387 each carry phosphoserine. Residues 395-446 form a chAM (Chromatin-association motif); required for chromatin association, mediates nucleosome association region; the sequence is SCTVPEGLLFPAEYYVRTTRSMSNCQRKVAVEAVIQSHLDVKKKGFKNKNKD. The segment at 440–525 is disordered; the sequence is FKNKNKDASK…RKSACTPASD (86 aa). Position 454 is a phosphoserine (Ser454). Residues 467–488 show a composition bias toward polar residues; it reads GTCTGQPSSRTSQKLLSLTKVS. Residue Ser660 is modified to Phosphoserine. Disordered stretches follow at residues 679 to 698 and 774 to 798; these read PGKSHPKRPNSQSQHTKTGL and KQFDSSGSPAKPHTTLQVSGRQGQP. The segment covering 687–698 has biased composition (polar residues); it reads PNSQSQHTKTGL. The segment at 775–1186 is required for interaction with POLH and POLH DNA synthesis stimulation; the sequence is QFDSSGSPAK…DGNIFVYHYS (412 aa). Ser781 is modified (phosphoserine). The segment at 853–1186 is interaction with RAD51, BRCA2 and POLH; that stretch reads GNLQLVSELK…DGNIFVYHYS (334 aa). 7 WD repeats span residues 854–915, 917–961, 962–1009, 1010–1052, 1058–1109, 1115–1153, and 1155–1186; these read NLQL…WHFA, VPVL…QVLL, KSGN…LMPP, EETI…MHID, SVCH…MLYC, AGRFLEGDVKDHCAAAILTSGTIAIWDLLLGQCTALLPP, and SDQHWSFVKWSGTDSHLLAGQKDGNIFVYHYS.

As to quaternary structure, homooligomer; dissociated upon DNA damage thus allowing association with BRCA1. Oligomerization is essential for its focal accumulation at DNA breaks. Part of a BRCA complex containing BRCA1, BRCA2 and PALB2. Interacts with BRCA1 and this interaction is essential for its function in HRR. Interacts with RAD51AP1 and MORF4L1/MRG15. Component of the homologous recombination repair (HR) complex composed of ERCC5/XPG, BRCA2, PALB2, DSS1 and RAD51. Within the complex, interacts with ERCC5/XPG and BRCA2. Interacts with BRCA2, RAD51C, RAD51 and XRCC3; the interactions are direct and it may serve as a scaffold for a HR complex containing PALB2, BRCA2, RAD51C, RAD51 and XRCC3. Interacts with POLH; the interaction is direct.

The protein localises to the nucleus. Plays a critical role in homologous recombination repair (HRR) through its ability to recruit BRCA2 and RAD51 to DNA breaks. Strongly stimulates the DNA strand-invasion activity of RAD51, stabilizes the nucleoprotein filament against a disruptive BRC3-BRC4 polypeptide and helps RAD51 to overcome the suppressive effect of replication protein A (RPA). Functionally cooperates with RAD51AP1 in promoting of D-loop formation by RAD51. Serves as the molecular scaffold in the formation of the BRCA1-PALB2-BRCA2 complex which is essential for homologous recombination. Via its WD repeats is proposed to scaffold a HR complex containing RAD51C and BRCA2 which is thought to play a role in HR-mediated DNA repair. Essential partner of BRCA2 that promotes the localization and stability of BRCA2. Also enables its recombinational repair and checkpoint functions of BRCA2. May act by promoting stable association of BRCA2 with nuclear structures, allowing BRCA2 to escape the effects of proteasome-mediated degradation. Binds DNA with high affinity for D loop, which comprises single-stranded, double-stranded and branched DNA structures. May play a role in the extension step after strand invasion at replication-dependent DNA double-strand breaks; together with BRCA2 is involved in both POLH localization at collapsed replication forks and DNA polymerization activity. The polypeptide is Partner and localizer of BRCA2 (PALB2) (Homo sapiens (Human)).